The primary structure comprises 185 residues: uncharacterized protein (185 aa).

3 helical membrane-spanning segments follow: residues 32–52, 66–86, and 155–175; these read LIFV…LLAF, LVTL…VLAV, and IGYG…FLVV.

The protein resides in the cell membrane. This is an uncharacterized protein from Bacillus subtilis (strain 168).